A 156-amino-acid polypeptide reads, in one-letter code: Proline dehydrogenase transcriptional activator (156 aa).

In terms of domain architecture, HTH asnC-type spans 10–71; that stretch reads LDHFDLKILE…VLNPQKLGVD (62 aa). Positions 29-48 form a DNA-binding region, H-T-H motif; it reads VLQLSKRVGLSKTPCQTRLK.

Functionally, transcriptional activator of the putA gene in response to proline. In Rhizobium radiobacter (Agrobacterium tumefaciens), this protein is Proline dehydrogenase transcriptional activator (putR).